Consider the following 456-residue polypeptide: GTPase Der (456 aa).

EngA-type G domains lie at Phe-3–Asp-167 and Ile-185–Asn-360. GTP-binding positions include Gly-9–Ser-16, Asp-56–Leu-60, and Asn-119–Glu-122. A disordered region spans residues Ile-162–Ala-181. Acidic residues predominate over residues Ser-166–Glu-178. Residues Gly-191–Ser-198, Asp-238–Leu-242, and Asn-303–Asp-306 each bind GTP. The region spanning Arg-361 to Ala-445 is the KH-like domain.

It belongs to the TRAFAC class TrmE-Era-EngA-EngB-Septin-like GTPase superfamily. EngA (Der) GTPase family. Associates with the 50S ribosomal subunit.

In terms of biological role, GTPase that plays an essential role in the late steps of ribosome biogenesis. In Bradyrhizobium sp. (strain ORS 278), this protein is GTPase Der.